An 864-amino-acid chain; its full sequence is MTTQSSSDGRMFTSSIIPVIPDSSPTAAEVIELSSQLSLPSPTSLLDFLSTSTSRGPTRSDTVGDKTQGKEVLDTRPILENSFRRENRVVTGTGGKAATGKRLKRRTESPGNACQSKIHIVSGEQIILGQSRPEKKAAKTKRTKKEDGLINYKLHGRVSKANQTVSRQPETKISAPKECNDTTQPAGNDHINDLDDGLQLEQATQRRFDWTPTKDTTIPVIDLVGDSPSSCEKSLSGMRSTRTMLSNYEFSGVVGTLGGSRSEGTPDAPTTKRPIELLKVNNFKEISGLSDDRQSSITEDSESATSKPRRVKAKNRPKSKLTTITSYATAKYTVVEKSVNLDPVETLLSDEPGKEKSAAKRTSGARCAKPGRKKSTTTEKKNEPPIFKVVHPLEAFKAFGGQELLFGTSSQLANGHSEDQHEQNEGTSHISNSSAFLPLSRSESSSKALSQASLGSGFLKLSSSKNLWSAGARDLTGAVLEIDEIDLSEHRMKPSIFAFQPKAPLGCKADTQIPPQLGEIDSDNSCQKPLAAIDPPEFVTRSETPSEKGVLHKYIVKPTHTNSCSQSGSSISVGSPEKPVQDKPIFNGFTTSELAKKVAAYGFKPIKSRDKMISLLEKCWENRNKAPNSVPKLTPGDGLSKVDEPTKGQSLGPHLQPNSISQKATTQVPKVKPAKRATKSQGVPVSSRRSTSTSKVSRKRTVSPSAILVDDDQTSDSTGDSVPPSRPRQPSKSCTPRDRENTPESFNLPTTPLTIRSGKVPSTVTSSESLPSLYTQITAAIKAQPRLRAFNGVKQPTWYEKILMYDPIQLEDLAVWLNTDGFERIGEDREVWPGLLREWCESKGVCCIWRKQRGARAHCPLVRA.

Disordered regions lie at residues 1-21 (MTTQ…PVIP), 49-69 (LSTS…KTQG), 91-113 (TGTG…PGNA), 161-190 (ANQT…GNDH), 289-318 (LSDD…NRPK), 346-385 (TLLS…NEPP), 413-433 (ANGH…ISNS), and 625-767 (KAPN…VTSS). Residues 295–306 (SSITEDSESATS) are compositionally biased toward polar residues. A compositionally biased stretch (basic residues) spans 307–318 (KPRRVKAKNRPK). Residues 656-668 (QPNSISQKATTQV) show a composition bias toward polar residues. Residues 685-695 (VSSRRSTSTSK) show a composition bias toward low complexity. Positions 743–767 (PESFNLPTTPLTIRSGKVPSTVTSS) are enriched in polar residues.

It belongs to the SLX4 family. As to quaternary structure, forms a heterodimer with SLX1. Post-translationally, phosphorylated in response to DNA damage.

The protein localises to the nucleus. Regulatory subunit of the SLX1-SLX4 structure-specific endonuclease that resolves DNA secondary structures generated during DNA repair and recombination. Has endonuclease activity towards branched DNA substrates, introducing single-strand cuts in duplex DNA close to junctions with ss-DNA. This Paracoccidioides lutzii (strain ATCC MYA-826 / Pb01) (Paracoccidioides brasiliensis) protein is Structure-specific endonuclease subunit SLX4.